We begin with the raw amino-acid sequence, 660 residues long: Peroxisomal acyl-coenzyme A oxidase 1 (660 aa).

At S26 the chain carries Phosphoserine. N6-succinyllysine is present on residues K89 and K90. Positions 139 and 178 each coordinate FAD. K216 carries the N6-acetyllysine modification. K241 is subject to N6-succinyllysine. N6-acetyllysine occurs at positions 255, 267, and 272. K349 is subject to N6-succinyllysine. E421 acts as the Proton acceptor in catalysis. K437 and K446 each carry N6-acetyllysine; alternate. 2 positions are modified to N6-succinyllysine; alternate: K437 and K446. N6-acetyllysine occurs at positions 500 and 504. N6-acetyllysine; alternate is present on K512. K512 is modified (N6-succinyllysine; alternate). An N6-succinyllysine modification is found at K542. K637 bears the N6-acetyllysine; alternate mark. N6-succinyllysine; alternate is present on K637. K643 is subject to N6-succinyllysine. S649 is subject to Phosphoserine. At K651 the chain carries N6-acetyllysine. Residue K654 is modified to N6-succinyllysine. A Microbody targeting signal motif is present at residues 658-660; sequence SKL.

It belongs to the acyl-CoA oxidase family. Homodimer. Interacts with LONP2. Requires FAD as cofactor. In terms of tissue distribution, widely expressed with highest levels of isoform 1 and isoform 2 detected in testis. Isoform 1 is expressed at higher levels than isoform 2 in liver and kidney while isoform 2 levels are higher in brain, lung, muscle, white adipose tissue and testis. Levels are almost equal in heart.

It localises to the peroxisome. The enzyme catalyses a 2,3-saturated acyl-CoA + O2 = a (2E)-enoyl-CoA + H2O2. It carries out the reaction hexadecanoyl-CoA + O2 = (2E)-hexadecenoyl-CoA + H2O2. The catalysed reaction is dodecanoyl-CoA + O2 = (2E)-dodecenoyl-CoA + H2O2. It catalyses the reaction octanoyl-CoA + O2 = (2E)-octenoyl-CoA + H2O2. The enzyme catalyses decanoyl-CoA + O2 = (2E)-decenoyl-CoA + H2O2. It carries out the reaction tetradecanoyl-CoA + O2 = (2E)-tetradecenoyl-CoA + H2O2. The catalysed reaction is hexadecanedioyl-CoA + O2 = (2E)-hexadecenedioyl-CoA + H2O2. It catalyses the reaction (5Z,8Z,11Z,14Z,17Z)-eicosapentaenoyl-CoA + O2 = (2E,5Z,8Z,11Z,14Z,17Z)-icosahexaenoyl-CoA + H2O2. The enzyme catalyses tetracosanoyl-CoA + O2 = (2E)-tetracosenoyl-CoA + H2O2. It carries out the reaction glutaryl-CoA + O2 = (2E)-glutaconyl-CoA + H2O2. The catalysed reaction is hexanoyl-CoA + O2 = (2E)-hexenoyl-CoA + H2O2. It catalyses the reaction octadecanoyl-CoA + O2 = (2E)-octadecenoyl-CoA + H2O2. The enzyme catalyses (6Z,9Z,12Z,15Z,18Z,21Z)-tetracosahexaenoyl-CoA + O2 = (2E,6Z,9Z,12Z,15Z,18Z,21Z)-tetracosaheptaenoyl-CoA + H2O2. It participates in lipid metabolism; peroxisomal fatty acid beta-oxidation. Involved in the initial and rate-limiting step of peroxisomal beta-oxidation of straight-chain saturated and unsaturated very-long-chain fatty acids. Catalyzes the desaturation of fatty acyl-CoAs such as palmitoyl-CoA (hexadecanoyl-CoA) to 2-trans-enoyl-CoAs ((2E)-enoyl-CoAs) such as (2E)-hexadecenoyl-CoA, and donates electrons directly to molecular oxygen (O(2)), thereby producing hydrogen peroxide (H(2)O(2)). Its function is as follows. Shows highest activity against medium-chain fatty acyl-CoAs. Shows optimum activity with a chain length of 10 carbons (decanoyl-CoA) in vitro. In terms of biological role, is active against a much broader range of substrates and shows activity towards long-chain fatty acyl-CoAs. The chain is Peroxisomal acyl-coenzyme A oxidase 1 from Homo sapiens (Human).